We begin with the raw amino-acid sequence, 629 residues long: DNA mismatch repair protein MutL (629 aa).

The interval Gln376 to Asn396 is disordered. A compositionally biased stretch (polar residues) spans Gln382–Asn396.

Belongs to the DNA mismatch repair MutL/HexB family.

In terms of biological role, this protein is involved in the repair of mismatches in DNA. It is required for dam-dependent methyl-directed DNA mismatch repair. May act as a 'molecular matchmaker', a protein that promotes the formation of a stable complex between two or more DNA-binding proteins in an ATP-dependent manner without itself being part of a final effector complex. This Haemophilus influenzae (strain PittEE) protein is DNA mismatch repair protein MutL.